The chain runs to 360 residues: Lipid-A-disaccharide synthase (360 aa).

It belongs to the LpxB family.

The catalysed reaction is a lipid X + a UDP-2-N,3-O-bis[(3R)-3-hydroxyacyl]-alpha-D-glucosamine = a lipid A disaccharide + UDP + H(+). It participates in bacterial outer membrane biogenesis; LPS lipid A biosynthesis. Condensation of UDP-2,3-diacylglucosamine and 2,3-diacylglucosamine-1-phosphate to form lipid A disaccharide, a precursor of lipid A, a phosphorylated glycolipid that anchors the lipopolysaccharide to the outer membrane of the cell. In Helicobacter pylori (strain Shi470), this protein is Lipid-A-disaccharide synthase.